The chain runs to 97 residues: Putative septation protein SpoVG (97 aa).

It belongs to the SpoVG family.

Essential for sporulation. Interferes with or is a negative regulator of the pathway leading to asymmetric septation. The chain is Putative septation protein SpoVG from Bacillus cytotoxicus (strain DSM 22905 / CIP 110041 / 391-98 / NVH 391-98).